The following is a 497-amino-acid chain: Vacuolar-processing enzyme (497 aa).

The signal sequence occupies residues 1–31 (METHKSLLFFTNYVLFLVFTLSFLPIPGLLA). His180 is an active-site residue. Cys222 serves as the catalytic Nucleophile. A disulfide bridge connects residues Cys255 and Cys269. Asn320 and Asn374 each carry an N-linked (GlcNAc...) asparagine glycan. 2 disulfides stabilise this stretch: Cys433-Cys463 and Cys445-Cys480.

This sequence belongs to the peptidase C13 family.

Functionally, asparagine-specific endopeptidase involved in the processing of vacuolar seed protein precursors into the mature forms. The protein is Vacuolar-processing enzyme of Ricinus communis (Castor bean).